Consider the following 295-residue polypeptide: Putative fused nickel transport protein NikMN (295 aa).

A run of 8 helical transmembrane segments spans residues Leu8–Ile28, Leu39–Gly59, Leu70–Ile90, Gly98–Gly118, Phe135–Ile155, Ala175–Ala195, Leu211–Val231, and Ala268–Leu288.

It belongs to the CbiM family. NikM subfamily.

The protein resides in the cell membrane. Functionally, may be involved in nickel transport. The polypeptide is Putative fused nickel transport protein NikMN (Archaeoglobus fulgidus (strain ATCC 49558 / DSM 4304 / JCM 9628 / NBRC 100126 / VC-16)).